Consider the following 371-residue polypeptide: Queuine tRNA-ribosyltransferase (371 aa).

The Proton acceptor role is filled by Asp93. Substrate-binding positions include Asp93–Phe97, Asp147, Gln191, and Gly218. The segment at Gly249–Asp255 is RNA binding. Asp268 (nucleophile) is an active-site residue. An RNA binding; important for wobble base 34 recognition region spans residues Thr273–Arg277. Cys306, Cys308, Cys311, and His337 together coordinate Zn(2+).

It belongs to the queuine tRNA-ribosyltransferase family. Homodimer. Within each dimer, one monomer is responsible for RNA recognition and catalysis, while the other monomer binds to the replacement base PreQ1. Zn(2+) is required as a cofactor.

It catalyses the reaction 7-aminomethyl-7-carbaguanine + guanosine(34) in tRNA = 7-aminomethyl-7-carbaguanosine(34) in tRNA + guanine. Its pathway is tRNA modification; tRNA-queuosine biosynthesis. In terms of biological role, catalyzes the base-exchange of a guanine (G) residue with the queuine precursor 7-aminomethyl-7-deazaguanine (PreQ1) at position 34 (anticodon wobble position) in tRNAs with GU(N) anticodons (tRNA-Asp, -Asn, -His and -Tyr). Catalysis occurs through a double-displacement mechanism. The nucleophile active site attacks the C1' of nucleotide 34 to detach the guanine base from the RNA, forming a covalent enzyme-RNA intermediate. The proton acceptor active site deprotonates the incoming PreQ1, allowing a nucleophilic attack on the C1' of the ribose to form the product. After dissociation, two additional enzymatic reactions on the tRNA convert PreQ1 to queuine (Q), resulting in the hypermodified nucleoside queuosine (7-(((4,5-cis-dihydroxy-2-cyclopenten-1-yl)amino)methyl)-7-deazaguanosine). This Leptospira biflexa serovar Patoc (strain Patoc 1 / Ames) protein is Queuine tRNA-ribosyltransferase.